A 94-amino-acid chain; its full sequence is Co-chaperonin GroES (94 aa).

Belongs to the GroES chaperonin family. In terms of assembly, heptamer of 7 subunits arranged in a ring. Interacts with the chaperonin GroEL.

Its subcellular location is the cytoplasm. Its function is as follows. Together with the chaperonin GroEL, plays an essential role in assisting protein folding. The GroEL-GroES system forms a nano-cage that allows encapsulation of the non-native substrate proteins and provides a physical environment optimized to promote and accelerate protein folding. GroES binds to the apical surface of the GroEL ring, thereby capping the opening of the GroEL channel. The protein is Co-chaperonin GroES of Bacillus licheniformis (strain ATCC 14580 / DSM 13 / JCM 2505 / CCUG 7422 / NBRC 12200 / NCIMB 9375 / NCTC 10341 / NRRL NRS-1264 / Gibson 46).